Consider the following 115-residue polypeptide: Large ribosomal subunit protein bL19 (115 aa).

It belongs to the bacterial ribosomal protein bL19 family.

In terms of biological role, this protein is located at the 30S-50S ribosomal subunit interface and may play a role in the structure and function of the aminoacyl-tRNA binding site. In Bacillus pumilus (strain SAFR-032), this protein is Large ribosomal subunit protein bL19.